A 180-amino-acid chain; its full sequence is Ribulose bisphosphate carboxylase small subunit, chloroplastic 3 (180 aa).

The transit peptide at 1–56 (MASSLMSNAITAVVGASGAQANMVAPFNGLKSIASFPVTRKSNDITSIASNGGRVQ) directs the protein to the chloroplast.

This sequence belongs to the RuBisCO small chain family. Heterohexadecamer of 8 large and 8 small subunits.

The protein localises to the plastid. It is found in the chloroplast. RuBisCO catalyzes two reactions: the carboxylation of D-ribulose 1,5-bisphosphate, the primary event in carbon dioxide fixation, as well as the oxidative fragmentation of the pentose substrate. Both reactions occur simultaneously and in competition at the same active site. Although the small subunit is not catalytic it is essential for maximal activity. The polypeptide is Ribulose bisphosphate carboxylase small subunit, chloroplastic 3 (Amaranthus hypochondriacus (Prince-of-Wales feather)).